The following is a 385-amino-acid chain: Proliferation-associated protein A (385 aa).

Belongs to the peptidase M24 family.

This is Proliferation-associated protein A (prlA) from Dictyostelium discoideum (Social amoeba).